The following is a 711-amino-acid chain: MVKLAKAGKNQGDPKKMAPPPKEVEEDSEDEEMSEDEEDDSSGEEVVIPQKKGKKAAATSAKKVVVSPTKKVAVATPAKKAAVTPGKKAAATPAKKTVTPAKAVATPGKKGATPGKALVATPGKKGAAIPAKGAKNGKNAKKEDSDEEEEDDSEEDDEDDEDEDEDEDEIEPAVMKAAAAAPASEDEDDEDDEDDEDEDDDDEEDDSEEEAMETTPAKGKKAAKVVPVKAKNVAEDEDEEEDDEDEDDDDDEDDEDEDDDDEDEEEEEEEEEPVKEAPGKRKKEMAKQKAAPEAKKQKVEGTEPTTAFNLFVGNLNFNKSAPELKTGISDVFAKNDLAVVDVRIGMTRKFGYVDFESAEDLEKALELTGLKVFGNEIKLEKPKGKDSKKERDARTLLAKNLPYKVTQDELKEVFEDAAEIRLVSKDGKSKGIAYIEFKTEADAEKTFEEKQGTEIDGRSISLYYTGEKGQNQDYRGGKNSTWSGESKTLVLSNLSYSATEETLQEVFEKATFIKVPQNQNGKSKGYAFIEFASFEDAKEALNSCNKREIEGRAIRLELQGPRGSPNARSQPSKTLFVKGLSEDTTEETLKESFDGSVRARIVTDRETGSSKGFGFVDFNSEEDAKAAKEAMEDGEIDGNKVTLDWAKPKGEGGFGGRGGGRGGFGGRGGGRGGRGGFGGRGRGGFGGRGGFRGGRGGGGDHKPQGKKTKFE.

The tract at residues 1–304 (MVKLAKAGKN…KKQKVEGTEP (304 aa)) is disordered. Residues lysine 9, lysine 15, and lysine 16 each carry the N6-acetyllysine modification. The span at 24–43 (VEEDSEDEEMSEDEEDDSSG) shows a compositional bias: acidic residues. Phosphoserine is present on residues serine 28, serine 34, serine 41, and serine 42. Residues 56–107 (AAATSAKKVVVSPTKKVAVATPAKKAAVTPGKKAAATPAKKTVTPAKAVATP) are compositionally biased toward low complexity. Copy 1 of the repeat occupies 58–65 (ATSAKKVV). Residues 58-135 (ATSAKKVVVS…GAAIPAKGAK (78 aa)) form an 8 X 8 AA tandem repeats of X-T-P-X-K-K-X-X region. Serine 67 is modified (phosphoserine). 4 positions are modified to phosphothreonine: threonine 69, threonine 76, threonine 84, and threonine 92. 3 tandem repeats follow at residues 75–82 (ATPAKKAA), 83–90 (VTPGKKAA), and 91–98 (ATPAKKTV). The residue at position 96 (lysine 96) is an N6-acetyllysine. The residue at position 99 (threonine 99) is a Phosphothreonine. The stretch at 99 to 104 (TPAKAV) is one 5; truncated repeat. Lysine 102 is subject to N6-acetyllysine. Repeat 6 spans residues 105–112 (ATPGKKGA). Threonine 106 carries the post-translational modification Phosphothreonine. Lysine 109 carries the post-translational modification N6-acetyllysine. Threonine 113 bears the Phosphothreonine mark. Residue lysine 116 is modified to N6-acetyllysine. 2 consecutive repeat copies span residues 120 to 127 (ATPGKKGA) and 128 to 135 (AIPAKGAK). Threonine 121 is subject to Phosphothreonine. Residues 122–137 (PGKKGAAIPAKGAKNG) show a composition bias toward low complexity. Lysine 124 carries the N6-acetyllysine modification. Phosphoserine is present on residues serine 145, serine 153, serine 184, and serine 207. Acidic residues-rich tracts occupy residues 145 to 171 (SDEE…DEIE) and 184 to 212 (SEDE…EEAM). Residue threonine 215 is modified to Phosphothreonine. A compositionally biased stretch (acidic residues) spans 235–273 (EDEDEEEDDEDEDDDDDEDDEDEDDDDEDEEEEEEEEEP). Residues 274-301 (VKEAPGKRKKEMAKQKAAPEAKKQKVEG) show a composition bias toward basic and acidic residues. Lysine 298 participates in a covalent cross-link: Glycyl lysine isopeptide (Lys-Gly) (interchain with G-Cter in SUMO1); alternate. Lysine 298 participates in a covalent cross-link: Glycyl lysine isopeptide (Lys-Gly) (interchain with G-Cter in SUMO2); alternate. Phosphothreonine is present on threonine 302. RRM domains follow at residues 308 to 384 (FNLF…KPKG) and 394 to 467 (RTLL…YTGE). The residue at position 319 (lysine 319) is an N6-acetyllysine. Lysine 325 is covalently cross-linked (Glycyl lysine isopeptide (Lys-Gly) (interchain with G-Cter in SUMO1); alternate). Lysine 325 is covalently cross-linked (Glycyl lysine isopeptide (Lys-Gly) (interchain with G-Cter in SUMO2); alternate). Residue lysine 349 is modified to N6-acetyllysine. Serine 357 carries the phosphoserine modification. Residue threonine 368 is modified to Phosphothreonine. Lysine 371 participates in a covalent cross-link: Glycyl lysine isopeptide (Lys-Gly) (interchain with G-Cter in SUMO2). Lysine 378 is covalently cross-linked (Glycyl lysine isopeptide (Lys-Gly) (interchain with G-Cter in SUMO2); alternate). Residue lysine 378 is modified to N6-acetyllysine; alternate. N6-acetyllysine occurs at positions 399 and 404. Threonine 406 bears the Phosphothreonine mark. 2 positions are modified to N6-acetyllysine: lysine 428 and lysine 445. Serine 459 and serine 461 each carry phosphoserine. N6-acetyllysine is present on residues lysine 468 and lysine 478. The region spanning 487-561 (KTLVLSNLSY…RAIRLELQGP (75 aa)) is the RRM 3 domain. Lysine 514 is covalently cross-linked (Glycyl lysine isopeptide (Lys-Gly) (interchain with G-Cter in SUMO2); alternate). Lysine 514 is subject to N6-acetyllysine; alternate. The residue at position 522 (lysine 522) is an N6-acetyllysine. A Phosphoserine modification is found at serine 564. N6-acetyllysine is present on lysine 573. In terms of domain architecture, RRM 4 spans 573–648 (KTLFVKGLSE…NKVTLDWAKP (76 aa)). Lysine 578 participates in a covalent cross-link: Glycyl lysine isopeptide (Lys-Gly) (interchain with G-Cter in SUMO2); alternate. An N6-acetyllysine; alternate modification is found at lysine 578. Serine 581 is modified (phosphoserine). A Glycyl lysine isopeptide (Lys-Gly) (interchain with G-Cter in SUMO1); alternate cross-link involves residue lysine 590. Lysine 590 is covalently cross-linked (Glycyl lysine isopeptide (Lys-Gly) (interchain with G-Cter in SUMO2); alternate). Phosphoserine is present on residues serine 592 and serine 620. Lysine 625 is covalently cross-linked (Glycyl lysine isopeptide (Lys-Gly) (interchain with G-Cter in SUMO2)). The disordered stretch occupies residues 641–711 (VTLDWAKPKG…KPQGKKTKFE (71 aa)). Lysine 647 is subject to N6-acetyllysine. Gly residues predominate over residues 651-697 (EGGFGGRGGGRGGFGGRGGGRGGRGGFGGRGRGGFGGRGGFRGGRGG). An asymmetric dimethylarginine mark is found at arginine 657, arginine 661, arginine 667, arginine 671, arginine 674, arginine 680, arginine 682, arginine 688, and arginine 692. Asymmetric dimethylarginine; alternate is present on arginine 695. Arginine 695 is subject to Omega-N-methylarginine; alternate. The span at 698 to 711 (GGDHKPQGKKTKFE) shows a compositional bias: basic and acidic residues.

Identified in a IGF2BP1-dependent mRNP granule complex containing untranslated mRNAs. Component of the SWAP complex that consists of NPM1, NCL/nucleolin, PARP1 and SWAP70. Component of a complex which is at least composed of HTATSF1/Tat-SF1, the P-TEFb complex components CDK9 and CCNT1, RNA polymerase II, SUPT5H, and NCL/nucleolin. Interacts with AICDA. Interacts with APTX. Interacts with C1QBP. Interacts with ERBB4. Interacts (via C-terminus) with FMR1 isoform 6 (via N-terminus). Interacts with GZF1; this interaction is important for nucleolar localization of GZF1. Interacts with NSUN2. Interacts with NVL. Interacts (via N-terminus domain) with SETX. Interacts (via RRM1 and C-terminal RRM4/Arg/Gly-rich domains) with TERT; the interaction is important for nucleolar localization of TERT. Interacts with WDR46. Interacts with ZFP36. Interacts with LRRC34. Interacts with RRP1B. Interacts with HNRNPU; this interaction occurs during mitosis. Interacts with RIOK1; RIOK1 recruits NCL to PRMT5 for symmetrically methylation. Interacts with ZBTB7B. Interacts with MDK; this interaction promotes NCL clustering and lateral movements of this complex into lipid rafts leading to MDK internalization. Interacts with HDGF. Interacts with ALKBH2. Interacts with IGFBP5; this interaction is necessary for IGFBP5 localization to the nucleus. Post-translationally, some glutamate residues are glycylated by TTLL8. This modification occurs exclusively on glutamate residues and results in a glycine chain on the gamma-carboxyl group. Symmetrically methylated by PRMT5.

The protein resides in the nucleus. Its subcellular location is the nucleolus. It localises to the cytoplasm. Nucleolin is the major nucleolar protein of growing eukaryotic cells. It is found associated with intranucleolar chromatin and pre-ribosomal particles. It induces chromatin decondensation by binding to histone H1. It is thought to play a role in pre-rRNA transcription and ribosome assembly. May play a role in the process of transcriptional elongation. Binds RNA oligonucleotides with 5'-UUAGGG-3' repeats more tightly than the telomeric single-stranded DNA 5'-TTAGGG-3' repeats. This Macaca fascicularis (Crab-eating macaque) protein is Nucleolin (NCL).